The primary structure comprises 351 residues: MTILSDVKALGQQIWLDNLSRSLVQSGELAQMLKQGVCGVTSNPAIFQKAFAGDALYADEVAALKQQDLSPKQRYETMAVADVRAACGICLAEHESTGGKTGFVSLEVSPELSKDAQGTVEEARRLYAAIGCKNAMIKVPATDAGIDALETLVSDGISVNLTLLFSRVQTLKAYAAYARGIAKRLAAGQSVAHIHVVASFFISRVDGALDTTLPDHLKGKIAIALAKAAYQDWEQYFTTPEFAALEAQGANRVQLLWASTGVKNPAYPDTLYVDNLIGAHTVNTVPDATLKAFIDHGTAKATLTEGVEEAQAQLAETAALGIDVETLANRLQEDGLKQFEEAFEKLLAPLV.

The active-site Schiff-base intermediate with substrate is K138.

It belongs to the transaldolase family. Type 2 subfamily.

It localises to the cytoplasm. It catalyses the reaction D-sedoheptulose 7-phosphate + D-glyceraldehyde 3-phosphate = D-erythrose 4-phosphate + beta-D-fructose 6-phosphate. It functions in the pathway carbohydrate degradation; pentose phosphate pathway; D-glyceraldehyde 3-phosphate and beta-D-fructose 6-phosphate from D-ribose 5-phosphate and D-xylulose 5-phosphate (non-oxidative stage): step 2/3. Transaldolase is important for the balance of metabolites in the pentose-phosphate pathway. The protein is Transaldolase of Neisseria meningitidis serogroup C (strain 053442).